The primary structure comprises 736 residues: Centrosomal protein kizuna (736 aa).

Positions 10–35 (HRAMKLQRNLRHCEGKRLELERELFQ) form a coiled coil. A compositionally biased stretch (polar residues) spans 192–208 (NTSFQLSQKMPVTSVAS). 4 disordered regions span residues 192 to 238 (NTSF…SAQL), 279 to 305 (SFTHANPSGASPDACDYINNQTSDKHS), 323 to 348 (EDKQCLDSSSDLTVSISESEDDSYPP), and 642 to 690 (TVEE…NMST). Basic and acidic residues predominate over residues 210–219 (EDGRTHRAQI). Polar residues predominate over residues 328–339 (LDSSSDLTVSIS). The span at 658–668 (SETSFSSSEKS) shows a compositional bias: low complexity. A compositionally biased stretch (polar residues) spans 678 to 690 (IQPNYMKSNNMST).

This sequence belongs to the kizuna family.

The protein localises to the cytoplasm. Its subcellular location is the cytoskeleton. It is found in the microtubule organizing center. The protein resides in the centrosome. It localises to the cilium basal body. Centrosomal protein required for establishing a robust mitotic centrosome architecture that can endure the forces that converge on the centrosomes during spindle formation. Required for stabilizing the expanded pericentriolar material around the centriole. This Xenopus laevis (African clawed frog) protein is Centrosomal protein kizuna (kiz).